The chain runs to 380 residues: Cytochrome b (380 aa).

The next 4 membrane-spanning stretches (helical) occupy residues 33-53 (FGSL…FLAM), 77-98 (WLIR…YLHV), 113-133 (WNIG…GYVL), and 178-198 (FFAF…IHLL). Heme b contacts are provided by His83 and His97. Heme b is bound by residues His182 and His196. His201 lines the a ubiquinone pocket. Transmembrane regions (helical) follow at residues 226 to 246 (YKDL…ALFS), 288 to 308 (LGGV…PMLH), 320 to 340 (LSQI…WIGG), and 347 to 367 (FVLI…IALP).

It belongs to the cytochrome b family. As to quaternary structure, the cytochrome bc1 complex contains 3 respiratory subunits (MT-CYB, CYC1 and UQCRFS1), 2 core proteins (UQCRC1 and UQCRC2) and probably 6 low-molecular weight proteins. Requires heme b as cofactor.

It localises to the mitochondrion inner membrane. Functionally, component of the ubiquinol-cytochrome c reductase complex (complex III or cytochrome b-c1 complex) that is part of the mitochondrial respiratory chain. The b-c1 complex mediates electron transfer from ubiquinol to cytochrome c. Contributes to the generation of a proton gradient across the mitochondrial membrane that is then used for ATP synthesis. The chain is Cytochrome b (mt-cyb) from Acipenser persicus (Persian sturgeon).